Consider the following 23-residue polypeptide: Hemocyanin subunit 1 (23 aa).

Residues 1 to 23 form a disordered region; it reads DSPGGASDTQKQHXVNSXXXKXY.

Belongs to the tyrosinase family. Hemocyanin subfamily. Hemolymph.

The protein resides in the secreted. The protein localises to the extracellular space. Functionally, hemocyanins are copper-containing oxygen carriers occurring freely dissolved in the hemolymph of many mollusks and arthropods. The sequence is that of Hemocyanin subunit 1 from Cancer pagurus (Rock crab).